Here is a 360-residue protein sequence, read N- to C-terminus: Isopentenyl-diphosphate delta-isomerase (360 aa).

Substrate is bound at residue 6–7; the sequence is RK. Residues Thr62, 63–65, Ser93, and Asn122 each bind FMN; that span reads GMT. A substrate-binding site is contributed by 93 to 95; the sequence is SQR. Residue Gln157 participates in substrate binding. Glu158 is a Mg(2+) binding site. Residues Lys189, Ser214, Thr219, 272 to 274, and 293 to 294 contribute to the FMN site; these read GIR and AL.

This sequence belongs to the IPP isomerase type 2 family. Homooctamer. Dimer of tetramers. FMN serves as cofactor. NADPH is required as a cofactor. The cofactor is Mg(2+).

It is found in the cytoplasm. The catalysed reaction is isopentenyl diphosphate = dimethylallyl diphosphate. Its function is as follows. Involved in the biosynthesis of isoprenoids. Catalyzes the 1,3-allylic rearrangement of the homoallylic substrate isopentenyl (IPP) to its allylic isomer, dimethylallyl diphosphate (DMAPP). The polypeptide is Isopentenyl-diphosphate delta-isomerase (Ignicoccus hospitalis (strain KIN4/I / DSM 18386 / JCM 14125)).